The sequence spans 953 residues: Homeobox protein LUMINIDEPENDENS (953 aa).

The homeobox DNA-binding region spans 63-123; it reads KIGKRPRDLL…VTQKTRVRKQ (61 aa). Residues 404–430 form a disordered region; sequence EQPGQKAAGKSPQTVRIGTSGRSRPMS. The span at 414–425 shows a compositional bias: polar residues; that stretch reads SPQTVRIGTSGR. 5 consecutive repeat copies span residues 498–502, 507–511, 516–520, 525–529, and 534–538. The tract at residues 498 to 538 is 5 X 5 AA repeats of Q-P-V-N-G; that stretch reads QPVNGFSTIQPVNGPSAVQPVNGPLAVQPVNGPSALQPVNG. 3 disordered regions span residues 606–668, 733–763, and 861–953; these read NSKE…EPQD, APNS…NPGM, and VGQM…KRWR. The span at 608 to 623 shows a compositional bias: basic and acidic residues; the sequence is KEADVQRNRNRRERET. Positions 651–661 are enriched in low complexity; that stretch reads PEIPSQQPPEE. Residues 733-742 are compositionally biased toward polar residues; that stretch reads APNSSSSSNK. Low complexity predominate over residues 869–884; that stretch reads SSSWRSQQSQNSYYSH. Polar residues-rich tracts occupy residues 888-934 and 942-953; these read EIAS…QQQA and THPYWNQNKRWR.

In terms of assembly, interacts with SUF4. As to expression, expressed in shoot apex, root apex, leaf primordia and floral buds.

It is found in the nucleus. In terms of biological role, seems to play a role in the regulation of flowering time in the autonomous flowering pathway by repressing FLOWERING LOCUS C expression. The protein is Homeobox protein LUMINIDEPENDENS (LD) of Arabidopsis thaliana (Mouse-ear cress).